The sequence spans 152 residues: Small ribosomal subunit protein uS19z (152 aa).

Belongs to the universal ribosomal protein uS19 family.

It localises to the cytoplasm. This is Small ribosomal subunit protein uS19z (RPS15B) from Arabidopsis thaliana (Mouse-ear cress).